The following is a 20-amino-acid chain: Tetracycline resistance leader peptide (20 aa).

The protein is Tetracycline resistance leader peptide (tetL) of Bacillus cereus.